Reading from the N-terminus, the 315-residue chain is MMMMSSLGGGGGGGGGSGGGIGGGGGGRFMTYSSSLSVPPSAPQSPNYSGGLRSQSSVFVEQEKYLSELLAERHKLTPFLPVLPHAFRLLNQEILRVTTLLENATVLSQSGLDHPSPLASGGIFQNARADMNGWASQFPSERSVPSSPGPNWLNSPGSSSGLIAKRTIRVDIPVDNYPNFNFVGRLLGPRGNSLKRVEASTDCRVLIRGRGSIKDPIKEEMMRGKPGYEHLNEPLHILVEAELPIEIVDARLMQAREILDDLLTPMEETHDMYKKQQLRELALLNGTLREEGSPMSGSVSPYNSLGMKRAKTREG.

Disordered regions lie at residues 1–53 (MMMM…GGLR) and 136–158 (SQFPSERSVPSSPGPNWLNSPGS). Residues 7-28 (LGGGGGGGGGSGGGIGGGGGGR) are compositionally biased toward gly residues. Polar residues-rich tracts occupy residues 31–53 (TYSSSLSVPPSAPQSPNYSGGLR) and 136–146 (SQFPSERSVPS). The KH domain maps to 171-238 (DIPVDNYPNF…EHLNEPLHIL (68 aa)). The segment at 289-315 (REEGSPMSGSVSPYNSLGMKRAKTREG) is disordered. A Phosphoserine modification is found at serine 300.

The protein resides in the nucleus. The sequence is that of KH domain-containing protein At5g56140 from Arabidopsis thaliana (Mouse-ear cress).